The following is a 229-amino-acid chain: Potassium/proton antiporter CemA (229 aa).

Transmembrane regions (helical) follow at residues 7–27 (FTPLFYLASIVFLPWWISFSV), 107–127 (ILHFSTNIICFIILSGYSILG), and 189–209 (IISGLVSTFPVILDTIFKYWI).

Belongs to the CemA family.

The protein localises to the plastid. It localises to the chloroplast inner membrane. It catalyses the reaction K(+)(in) + H(+)(out) = K(+)(out) + H(+)(in). Its function is as follows. Contributes to K(+)/H(+) antiport activity by supporting proton efflux to control proton extrusion and homeostasis in chloroplasts in a light-dependent manner to modulate photosynthesis. Prevents excessive induction of non-photochemical quenching (NPQ) under continuous-light conditions. Indirectly promotes efficient inorganic carbon uptake into chloroplasts. The sequence is that of Potassium/proton antiporter CemA from Nicotiana tomentosiformis (Tobacco).